The following is a 639-amino-acid chain: Complex I assembly factor Egm, mitochondrial (639 aa).

The N-terminal 26 residues, 1-26 (MRPNLFSGASRLLTYSRNGKLLTRGR), are a transit peptide targeting the mitochondrion. Residues 23 to 65 (TRGRSTKATSSSLDSQHQDAATTEGGRAESVEESPEQQRKLPT) form a disordered region. Residues 28-43 (TKATSSSLDSQHQDAA) are compositionally biased toward polar residues. The span at 48–65 (GRAESVEESPEQQRKLPT) shows a compositional bias: basic and acidic residues.

The protein belongs to the acyl-CoA dehydrogenase family. As to quaternary structure, associates with mitochondrial complex I assembly intermediates during its biogenesis. FAD serves as cofactor.

It is found in the mitochondrion. Its function is as follows. As part of the MCIA complex, primarily participates in the assembly of the mitochondrial complex I and therefore plays a role in oxidative phosphorylation. This is Complex I assembly factor Egm, mitochondrial from Drosophila melanogaster (Fruit fly).